The following is a 350-amino-acid chain: MTLQRVSPDGILDLTIIGGGPTGIFAAFQCGMNNISCRIIESMPQLGGQLSALYPEKHIYDVAGFPEVPAAGLVDSLWKQTERYGPEVILGETVISYRKLENGDFQVVTASGRTFVSRALLLAAGLGAFSPRKLPQLGNISPLEDRSVFYAVKNRADFRDKNVVIVGGGDSALDWTVGLMGVARKVTLVHRMHEFQGHGKTAREVDEAKESGAIDVHLSTEVSAIDLNGDTLQAVHLKRRDGITSRVEADRLLLLIGFKSNLGPLADWGLELVDNAVEVDGHMKTSVDGLYAAGDIASYPGKLKIIQTGLSDAAMAVRHSLTYIKPGEKIRHTFSSVKMAKEKKSEGQNA.

FAD is bound by residues threonine 22, glutamate 41, glutamine 49, tyrosine 54, valine 94, phenylalanine 129, aspartate 295, and serine 336.

This sequence belongs to the ferredoxin--NADP reductase type 2 family. In terms of assembly, homodimer. FAD is required as a cofactor.

The catalysed reaction is 2 reduced [2Fe-2S]-[ferredoxin] + NADP(+) + H(+) = 2 oxidized [2Fe-2S]-[ferredoxin] + NADPH. The sequence is that of Ferredoxin--NADP reductase from Chlorobium luteolum (strain DSM 273 / BCRC 81028 / 2530) (Pelodictyon luteolum).